A 170-amino-acid polypeptide reads, in one-letter code: Lipoprotein signal peptidase (170 aa).

4 consecutive transmembrane segments (helical) span residues 11 to 31 (LGWL…KAHF), 41 to 61 (IVVI…AAFS), 69 to 89 (WQRW…VVWL), and 95 to 115 (DDTW…GNLY). Catalysis depends on residues D125 and D144. The chain crosses the membrane as a helical span at residues 136-156 (YFPAFNFADSAITVGAIMLAL).

It belongs to the peptidase A8 family.

It is found in the cell inner membrane. The catalysed reaction is Release of signal peptides from bacterial membrane prolipoproteins. Hydrolyzes -Xaa-Yaa-Zaa-|-(S,diacylglyceryl)Cys-, in which Xaa is hydrophobic (preferably Leu), and Yaa (Ala or Ser) and Zaa (Gly or Ala) have small, neutral side chains.. The protein operates within protein modification; lipoprotein biosynthesis (signal peptide cleavage). This protein specifically catalyzes the removal of signal peptides from prolipoproteins. This is Lipoprotein signal peptidase from Pseudomonas fluorescens.